A 232-amino-acid polypeptide reads, in one-letter code: tRNA (guanine-N(1)-)-methyltransferase (232 aa).

S-adenosyl-L-methionine contacts are provided by residues Gly111 and 131–136 (IGDYIL).

This sequence belongs to the RNA methyltransferase TrmD family. As to quaternary structure, homodimer.

The protein resides in the cytoplasm. It catalyses the reaction guanosine(37) in tRNA + S-adenosyl-L-methionine = N(1)-methylguanosine(37) in tRNA + S-adenosyl-L-homocysteine + H(+). Specifically methylates guanosine-37 in various tRNAs. The chain is tRNA (guanine-N(1)-)-methyltransferase from Bartonella quintana (strain Toulouse) (Rochalimaea quintana).